Here is a 222-residue protein sequence, read N- to C-terminus: Protein GrpE (222 aa).

Disordered regions lie at residues 1 to 21 (MNDG…ENGQ) and 200 to 222 (KGGP…PEGA).

It belongs to the GrpE family. Homodimer.

It localises to the cytoplasm. Participates actively in the response to hyperosmotic and heat shock by preventing the aggregation of stress-denatured proteins, in association with DnaK and GrpE. It is the nucleotide exchange factor for DnaK and may function as a thermosensor. Unfolded proteins bind initially to DnaJ; upon interaction with the DnaJ-bound protein, DnaK hydrolyzes its bound ATP, resulting in the formation of a stable complex. GrpE releases ADP from DnaK; ATP binding to DnaK triggers the release of the substrate protein, thus completing the reaction cycle. Several rounds of ATP-dependent interactions between DnaJ, DnaK and GrpE are required for fully efficient folding. The protein is Protein GrpE of Chelativorans sp. (strain BNC1).